The sequence spans 345 residues: tRNA pseudouridine synthase B (345 aa).

Aspartate 39 (nucleophile) is an active-site residue.

The protein belongs to the pseudouridine synthase TruB family. Type 1 subfamily.

It catalyses the reaction uridine(55) in tRNA = pseudouridine(55) in tRNA. In terms of biological role, responsible for synthesis of pseudouridine from uracil-55 in the psi GC loop of transfer RNAs. The sequence is that of tRNA pseudouridine synthase B from Rickettsia peacockii (strain Rustic).